The sequence spans 333 residues: Taste receptor type 2 member 38 (333 aa).

The Extracellular segment spans residues 1-17 (MLTLTHICTVSYEVRST). A helical transmembrane segment spans residues 18–38 (FLFISVLEFAVGFLTNAFISL). Residues 39–55 (VNFWDVVKRQPLSNSDC) lie on the Cytoplasmic side of the membrane. The helical transmembrane segment at 56-76 (VLLCLSISRLFLHGLLFLSAI) threads the bilayer. Over 77 to 94 (QLTHFQKLSEPLNHSYQV) the chain is Extracellular. Residues 95 to 115 (ILMLWMIANQANLWLAACLSL) form a helical membrane-spanning segment. Over 116–142 (LYCSKLIRFSHTFLICLASWVSRKISQ) the chain is Cytoplasmic. The chain crosses the membrane as a helical span at residues 143–163 (MLLGIILCSCICTVLCVWCFF). Topologically, residues 164-190 (GRLHFTVTTVLFMNNNTRLNWQIKDLN) are extracellular. N-linked (GlcNAc...) asparagine glycosylation occurs at N178. The chain crosses the membrane as a helical span at residues 191–211 (LFYSFLFCYLWSVPPFLLFLV). Residues 212 to 251 (SSGMLTVSLGRHMRTMKVYTRDSRDPSLEAHIKALKSLVS) lie on the Cytoplasmic side of the membrane. The helical transmembrane segment at 252 to 272 (FFCFFVISSCAAFISVPLLIL) threads the bilayer. Residues 273–276 (WHDK) lie on the Extracellular side of the membrane. The helical transmembrane segment at 277–297 (IGVMVCVGIMAACPSGHAAVL) threads the bilayer. The Cytoplasmic segment spans residues 298-333 (ISGNAKLRRAVTTILLWAQSSLKVRADHMADSRTLC).

Belongs to the G-protein coupled receptor T2R family.

The protein resides in the membrane. Its function is as follows. Receptor that may play a role in the perception of bitterness and is gustducin-linked. May play a role in sensing the chemical composition of the gastrointestinal content. The activity of this receptor may stimulate alpha gustducin, mediate PLC-beta-2 activation and lead to the gating of TRPM5. In Papio hamadryas (Hamadryas baboon), this protein is Taste receptor type 2 member 38 (TAS2R38).